Consider the following 257-residue polypeptide: Homeobox protein goosecoid (257 aa).

Residues 160 to 219 (KRRHRTIFTDEQLEALENLFQETKYPDVGTREQLARKVHLREEKVEVWFKNRRAKWRRQK) constitute a DNA-binding region (homeobox). Residues 213-257 (AKWRRQKRSSSEESENAEKWNKTSSSKASPEKREEEGKSDLDSDS) form a disordered region. Over residues 241–257 (SPEKREEEGKSDLDSDS) the composition is skewed to basic and acidic residues.

This sequence belongs to the paired homeobox family. Bicoid subfamily.

The protein resides in the nucleus. Regulates chordin (CHRD). May play a role in spatial programing within discrete embryonic fields or lineage compartments during organogenesis. In concert with NKX3-2, plays a role in defining the structural components of the middle ear; required for the development of the entire tympanic ring. Probably involved in the regulatory networks that define neural crest cell fate specification and determine mesoderm cell lineages in mammals. In Pongo pygmaeus (Bornean orangutan), this protein is Homeobox protein goosecoid (GSC).